A 488-amino-acid chain; its full sequence is BTB/POZ domain-containing protein 1 (488 aa).

Over residues 1 to 19 the composition is skewed to low complexity; it reads MASLGSAAAGEPATGAEAE. Positions 1-42 are disordered; that stretch reads MASLGSAAAGEPATGAEAEPGPPAPPPPPPPPPAPSPSALGP. A compositionally biased stretch (pro residues) spans 20-36; sequence PGPPAPPPPPPPPPAPS. Residues 75 to 151 form the BTB domain; the sequence is SDVRFVLGKG…LYSDEVQIGP (77 aa). Arg85 is subject to Omega-N-methylarginine. The region spanning 190-290 is the BACK domain; sequence LTQARLFDEP…IRFPLMTIEE (101 aa).

In terms of assembly, interacts (via C-terminus) with TOP1. Interacts with TRIM5 isoform Delta. Interacts with CUL3. In terms of tissue distribution, strongly expressed in heart and skeletal muscle. Weakly expressed in myoblast C2C12 cells, but strongly up-regulated upon their differentiation into myotubes.

Its subcellular location is the cytoplasm. It participates in protein modification; protein ubiquitination. Functionally, probable substrate-specific adapter of an E3 ubiquitin-protein ligase complex which mediates the ubiquitination and subsequent proteasomal degradation of target proteins. Seems to regulate expression levels and/or subnuclear distribution of TOP1, via an unknown mechanism. May play a role in mesenchymal differentiation where it promotes myogenic differentiation and suppresses adipogenesis. This is BTB/POZ domain-containing protein 1 (Btbd1) from Mus musculus (Mouse).